A 425-amino-acid polypeptide reads, in one-letter code: Serine--tRNA ligase (425 aa).

231–233 (TAE) is an L-serine binding site. 262–264 (RRE) is a binding site for ATP. Residue E285 participates in L-serine binding. 349–352 (EISS) contacts ATP. S385 provides a ligand contact to L-serine.

This sequence belongs to the class-II aminoacyl-tRNA synthetase family. Type-1 seryl-tRNA synthetase subfamily. In terms of assembly, homodimer. The tRNA molecule binds across the dimer.

It is found in the cytoplasm. The catalysed reaction is tRNA(Ser) + L-serine + ATP = L-seryl-tRNA(Ser) + AMP + diphosphate + H(+). It carries out the reaction tRNA(Sec) + L-serine + ATP = L-seryl-tRNA(Sec) + AMP + diphosphate + H(+). It participates in aminoacyl-tRNA biosynthesis; selenocysteinyl-tRNA(Sec) biosynthesis; L-seryl-tRNA(Sec) from L-serine and tRNA(Sec): step 1/1. Functionally, catalyzes the attachment of serine to tRNA(Ser). Is also able to aminoacylate tRNA(Sec) with serine, to form the misacylated tRNA L-seryl-tRNA(Sec), which will be further converted into selenocysteinyl-tRNA(Sec). The chain is Serine--tRNA ligase from Aquifex aeolicus (strain VF5).